The following is an 841-amino-acid chain: Probable outer membrane usher protein EcpC (841 aa).

The N-terminal stretch at 1 to 29 is a signal peptide; the sequence is MPLRRFSPGLKAQFAFGMVFLFVQPDASA.

Belongs to the EcpC/MatD family.

Part of the ecpRABCDE operon, which encodes the E.coli common pilus (ECP). ECP is found in both commensal and pathogenic strains and plays a dual role in early-stage biofilm development and host cell recognition. The protein is Probable outer membrane usher protein EcpC (ecpC) of Escherichia coli O6:H1 (strain CFT073 / ATCC 700928 / UPEC).